Reading from the N-terminus, the 257-residue chain is Pimeloyl-[acyl-carrier protein] methyl ester esterase (257 aa).

The region spanning 16-242 (LVLLHGWGLN…AAHAPFISHP (227 aa)) is the AB hydrolase-1 domain. Residues W22, 82 to 83 (SL), and 143 to 147 (FLGLQ) each bind substrate. The active-site Nucleophile is S82. Catalysis depends on residues D207 and H235. H235 is a substrate binding site.

The protein belongs to the AB hydrolase superfamily. Carboxylesterase BioH family. As to quaternary structure, monomer.

It is found in the cytoplasm. The catalysed reaction is 6-carboxyhexanoyl-[ACP] methyl ester + H2O = 6-carboxyhexanoyl-[ACP] + methanol + H(+). The protein operates within cofactor biosynthesis; biotin biosynthesis. The physiological role of BioH is to remove the methyl group introduced by BioC when the pimeloyl moiety is complete. It allows to synthesize pimeloyl-ACP via the fatty acid synthetic pathway through the hydrolysis of the ester bonds of pimeloyl-ACP esters. In Sodalis glossinidius (strain morsitans), this protein is Pimeloyl-[acyl-carrier protein] methyl ester esterase.